Here is a 228-residue protein sequence, read N- to C-terminus: ATP synthase subunit a 2 (228 aa).

Helical transmembrane passes span 16–36, 74–94, 103–123, 139–159, 173–193, and 194–214; these read VGTT…GAWL, VFPF…SSLI, DLSA…WFGI, SPFL…ALAV, LLVL…LHIV, and EALV…AGAI.

This sequence belongs to the ATPase A chain family. F-type ATPases have 2 components, CF(1) - the catalytic core - and CF(0) - the membrane proton channel. CF(1) has five subunits: alpha(3), beta(3), gamma(1), delta(1), epsilon(1). CF(0) has three main subunits: a(1), b(2) and c(9-12). The alpha and beta chains form an alternating ring which encloses part of the gamma chain. CF(1) is attached to CF(0) by a central stalk formed by the gamma and epsilon chains, while a peripheral stalk is formed by the delta and b chains.

Its subcellular location is the cell inner membrane. Key component of the proton channel; it plays a direct role in the translocation of protons across the membrane. This chain is ATP synthase subunit a 2, found in Pelobacter propionicus (strain DSM 2379 / NBRC 103807 / OttBd1).